The following is a 221-amino-acid chain: Large ribosomal subunit protein uL3 (221 aa).

A disordered region spans residues 131–165 (HNQSRGPETHGSRHHRRPGSMGPIKGKIKGKKLPG).

This sequence belongs to the universal ribosomal protein uL3 family. Part of the 50S ribosomal subunit. Forms a cluster with proteins L14 and L19.

In terms of biological role, one of the primary rRNA binding proteins, it binds directly near the 3'-end of the 23S rRNA, where it nucleates assembly of the 50S subunit. This chain is Large ribosomal subunit protein uL3, found in Phytoplasma australiense.